Reading from the N-terminus, the 1927-residue chain is Lactase/phlorizin hydrolase (1927 aa).

The N-terminal stretch at 1-19 is a signal peptide; that stretch reads MELSWHVVFIALLSFSCWG. Residues 20 to 868 constitute a propeptide, XBetaGly; that stretch reads SDWESDRNFI…NTVNLPSKVR (849 aa). The Extracellular segment spans residues 20–1882; sequence SDWESDRNFI…LMLGTTEAQT (1863 aa). The N-linked (GlcNAc...) asparagine glycan is linked to N42. The segment at 44–286 is glycosyl hydrolase-1 1; Region I; sequence SGLLGDQSSN…FIFNLKLPDC (243 aa). The interval 362-855 is glycosyl hydrolase-1 2; Region II; that stretch reads IWEAFANQSR…GFLTKGAKRL (494 aa). N-linked (GlcNAc...) asparagine glycosylation is found at N368, N418, N512, N821, N934, N946, and N989. The interval 902 to 1366 is glycosyl hydrolase-1 3; Region III. Phlorizin hydrolase/glycosylceramidase activity; the sequence is TFRDDFLWGV…EVITNNGMPL (465 aa). E1065 acts as the Proton donor; for phlorizin hydrolase/Glycosylceramidase activity in catalysis. N-linked (GlcNAc...) asparagine glycosylation occurs at N1174. A disordered region spans residues 1220–1244; the sequence is RLNPPSYEDDQEMAEEEDPSWPSTA. The span at 1226–1238 shows a compositional bias: acidic residues; sequence YEDDQEMAEEEDP. E1273 (nucleophile; for phlorizin hydrolase/Glycosylceramidase activity) is an active-site residue. N1340 and N1508 each carry an N-linked (GlcNAc...) asparagine glycan. The tract at residues 1373–1846 is glycosyl hydrolase-1 4; Region IV. Lactase activity; that stretch reads LYGRFPEGFI…CNGFPDPATG (474 aa). E1538 serves as the catalytic Proton donor; for lactase activity. The interval 1647 to 1927 is required for homodimerization and transport to the plasma membrane; it reads RDRSLAAGLN…QQELSPVSSF (281 aa). Residues N1656 and N1672 are each glycosylated (N-linked (GlcNAc...) asparagine). E1749 serves as the catalytic Nucleophile; for lactase activity. Residues N1761 and N1814 are each glycosylated (N-linked (GlcNAc...) asparagine). A helical transmembrane segment spans residues 1883–1901; that stretch reads ALYVLFSLVLLGVCGLAFL. Residues 1902-1927 are Cytoplasmic-facing; the sequence is SYKYCKRSKQGKTQRSQQELSPVSSF.

Belongs to the glycosyl hydrolase 1 family. In terms of assembly, homodimer. N-glycosylated. As to expression, specifically expressed in small intestine.

Its subcellular location is the apical cell membrane. The enzyme catalyses lactose + H2O = beta-D-galactose + D-glucose. The catalysed reaction is phlorizin + H2O = phloretin + beta-D-glucose. It catalyses the reaction D-cellobiose + H2O = beta-D-glucose + D-glucose. It carries out the reaction quercetin 4'-O-beta-D-glucoside + H2O = quercetin + beta-D-glucose. The enzyme catalyses quercetin 3-O-beta-D-glucoside + H2O = quercetin + beta-D-glucose. The catalysed reaction is kaempferol 3-O-beta-D-glucoside + H2O = kaempferol + beta-D-glucose. It catalyses the reaction luteolin 7-O-beta-D-glucoside + H2O = luteolin + beta-D-glucose. It carries out the reaction luteolin 4'-O-beta-D-glucoside + H2O = luteolin + beta-D-glucose. The enzyme catalyses (2S)-naringenin 7-O-beta-D-glucoside + H2O = (2S)-naringenin + beta-D-glucose. The catalysed reaction is eriodictyol-7-O-beta-D-glucoside + H2O = (S)-eriodictyol + beta-D-glucose. It catalyses the reaction apigenin 7-O-beta-D-glucoside + H2O = apigenin + beta-D-glucose. It carries out the reaction daidzein 7-O-beta-D-glucoside + H2O = daidzein + beta-D-glucose + H(+). The enzyme catalyses genistein 7-O-beta-D-glucoside + H2O = genistein + beta-D-glucose. The catalysed reaction is a beta-D-galactosyl-N-acylsphingosine + H2O = a ceramide + beta-D-galactose.. It catalyses the reaction beta-D-glucosyl-(1&lt;-&gt;1')-N-hexadecanoylsphing-4-enine + H2O = N-hexadecanoylsphing-4-enine + beta-D-glucose. It carries out the reaction beta-D-galactosyl-(1&lt;-&gt;1')-N-hexadecanoylsphing-4-enine + H2O = beta-D-galactose + N-hexadecanoylsphing-4-enine. The enzyme catalyses beta-D-galactosyl-(1&lt;-&gt;1')-N-hexadecanoylsphinganine + H2O = N-hexadecanoylsphinganine + beta-D-galactose. The catalysed reaction is beta-D-glucosyl-(1&lt;-&gt;1')-N-hexadecanoylsphinganine + H2O = N-hexadecanoylsphinganine + beta-D-glucose. Functionally, broad specificity glycosidase of the intestinal brush border membrane that hydrolyzes lactose, the main sugar in mammalian milk, to produce D-glucose and D-galactose. The mature protein is composed of two domains that catalyze the hydrolysis of beta-glucopyranosides and beta-galactopyranosides, with a preference for hydrophilic aglycones (in lactose and cellobiose) for one domain and hydrophobic aglycones (in phlorizin and glycosylceramides) for the other. This chain is Lactase/phlorizin hydrolase, found in Homo sapiens (Human).